The primary structure comprises 221 residues: Sperm acrosome membrane-associated protein 3 (221 aa).

The Cytoplasmic portion of the chain corresponds to Met-1 to Gln-69. A helical; Signal-anchor for type II membrane protein membrane pass occupies residues Leu-70 to Ser-90. The Extracellular portion of the chain corresponds to Ser-91–Phe-221. The C-type lysozyme domain occupies Lys-94 to Phe-221. Intrachain disulfides connect Cys-99–Cys-219, Cys-123–Cys-207, Cys-157–Cys-172, and Cys-168–Cys-186.

This sequence belongs to the glycosyl hydrolase 22 family. As to quaternary structure, interacts with ASTL. In terms of tissue distribution, the processed form is expressed in sperm (at protein level). Expressed strongly in testis and epididymis and weakly in pancreas.

Its subcellular location is the cytoplasmic vesicle. The protein resides in the secretory vesicle. It localises to the acrosome membrane. The protein localises to the secreted. Functionally, sperm surface membrane protein that may be involved in sperm-egg plasma membrane adhesion and fusion during fertilization. It could be a potential receptor for the egg oligosaccharide residue N-acetylglucosamine, which is present in the extracellular matrix over the egg plasma membrane. The processed form has no detectable bacteriolytic activity in vitro. The sequence is that of Sperm acrosome membrane-associated protein 3 (Spaca3) from Mus musculus (Mouse).